A 247-amino-acid chain; its full sequence is ATP synthase subunit a, chloroplastic (247 aa).

A run of 5 helical transmembrane segments spans residues 38-58 (QVLI…SIAV), 95-115 (VPFI…GALL), 134-154 (INTT…AGLS), 199-219 (LVVV…VMFL), and 220-240 (GLFT…AYIG).

Belongs to the ATPase A chain family. F-type ATPases have 2 components, CF(1) - the catalytic core - and CF(0) - the membrane proton channel. CF(1) has five subunits: alpha(3), beta(3), gamma(1), delta(1), epsilon(1). CF(0) has four main subunits: a, b, b' and c.

The protein resides in the plastid. It localises to the chloroplast thylakoid membrane. Functionally, key component of the proton channel; it plays a direct role in the translocation of protons across the membrane. This is ATP synthase subunit a, chloroplastic from Oenothera argillicola (Appalachian evening primrose).